Consider the following 323-residue polypeptide: Probable cell division protein WhiA (323 aa).

Positions 279–313 (TLKELGEMVSGGKISKSGINHRLRKLDEIAERLRA) form a DNA-binding region, H-T-H motif.

The protein belongs to the WhiA family.

Involved in cell division and chromosome segregation. The chain is Probable cell division protein WhiA from Anoxybacillus flavithermus (strain DSM 21510 / WK1).